The following is a 568-amino-acid chain: Nitrite reductase (568 aa).

Positions 1-25 (MPFGKPLVGTLLASLTLLGLATAHA) are cleaved as a signal peptide. An N-terminal tail region spans residues 26 to 54 (KDDMKAAEQYQGAASAVDPAHVVRTNGAP). One can recognise a Cytochrome c domain in the interval 55 to 140 (DMSESEFNEA…AKYIQHTPPQ (86 aa)). Positions 72, 75, 76, 96, 109, and 113 each coordinate heme c. Residues 141–568 (PPEWGMPEMR…NVYNTQHDVY (428 aa)) are D1-heme domain. The heme d1 site is built by His-207, Arg-250, Ser-251, Tyr-270, Arg-397, and Gln-508.

Homodimer. Heme c serves as cofactor. It depends on heme as a cofactor.

Its subcellular location is the periplasm. It catalyses the reaction nitric oxide + Fe(III)-[cytochrome c] + H2O = Fe(II)-[cytochrome c] + nitrite + 2 H(+). It carries out the reaction A + NH4(+) + H2O = hydroxylamine + AH2 + H(+). The sequence is that of Nitrite reductase (nirS) from Pseudomonas aeruginosa (strain ATCC 15692 / DSM 22644 / CIP 104116 / JCM 14847 / LMG 12228 / 1C / PRS 101 / PAO1).